We begin with the raw amino-acid sequence, 150 residues long: Deoxyuridine 5'-triphosphate nucleotidohydrolase (150 aa).

Substrate contacts are provided by residues 70–72 (RSG), N82, 86–88 (LID), and M96.

This sequence belongs to the dUTPase family. The cofactor is Mg(2+).

The catalysed reaction is dUTP + H2O = dUMP + diphosphate + H(+). It functions in the pathway pyrimidine metabolism; dUMP biosynthesis; dUMP from dCTP (dUTP route): step 2/2. This enzyme is involved in nucleotide metabolism: it produces dUMP, the immediate precursor of thymidine nucleotides and it decreases the intracellular concentration of dUTP so that uracil cannot be incorporated into DNA. This Baumannia cicadellinicola subsp. Homalodisca coagulata protein is Deoxyuridine 5'-triphosphate nucleotidohydrolase.